Reading from the N-terminus, the 211-residue chain is Thiamine-phosphate synthase (211 aa).

4-amino-2-methyl-5-(diphosphooxymethyl)pyrimidine-binding positions include 37 to 41 (QLRIK) and asparagine 69. Residues aspartate 70 and aspartate 89 each coordinate Mg(2+). Serine 108 is a binding site for 4-amino-2-methyl-5-(diphosphooxymethyl)pyrimidine. A 2-[(2R,5Z)-2-carboxy-4-methylthiazol-5(2H)-ylidene]ethyl phosphate-binding site is contributed by 134–136 (TQT). Lysine 137 is a binding site for 4-amino-2-methyl-5-(diphosphooxymethyl)pyrimidine. 2-[(2R,5Z)-2-carboxy-4-methylthiazol-5(2H)-ylidene]ethyl phosphate is bound by residues glycine 166 and 186–187 (VS).

It belongs to the thiamine-phosphate synthase family. Mg(2+) serves as cofactor.

It carries out the reaction 2-[(2R,5Z)-2-carboxy-4-methylthiazol-5(2H)-ylidene]ethyl phosphate + 4-amino-2-methyl-5-(diphosphooxymethyl)pyrimidine + 2 H(+) = thiamine phosphate + CO2 + diphosphate. The enzyme catalyses 2-(2-carboxy-4-methylthiazol-5-yl)ethyl phosphate + 4-amino-2-methyl-5-(diphosphooxymethyl)pyrimidine + 2 H(+) = thiamine phosphate + CO2 + diphosphate. It catalyses the reaction 4-methyl-5-(2-phosphooxyethyl)-thiazole + 4-amino-2-methyl-5-(diphosphooxymethyl)pyrimidine + H(+) = thiamine phosphate + diphosphate. Its pathway is cofactor biosynthesis; thiamine diphosphate biosynthesis; thiamine phosphate from 4-amino-2-methyl-5-diphosphomethylpyrimidine and 4-methyl-5-(2-phosphoethyl)-thiazole: step 1/1. Its function is as follows. Condenses 4-methyl-5-(beta-hydroxyethyl)thiazole monophosphate (THZ-P) and 2-methyl-4-amino-5-hydroxymethyl pyrimidine pyrophosphate (HMP-PP) to form thiamine monophosphate (TMP). The sequence is that of Thiamine-phosphate synthase from Escherichia coli O9:H4 (strain HS).